The primary structure comprises 790 residues: Phenylalanine--tRNA ligase beta subunit (790 aa).

The tRNA-binding domain maps to 39-154 (PDSLNTVVTG…ADTPLGESAC (116 aa)). A B5 domain is found at 404 to 483 (FSPLSLSVRP…FVQKTQKILP (80 aa)). Positions 457, 463, 466, and 467 each coordinate Mg(2+). The FDX-ACB domain maps to 694–790 (PIYPASSRDI…KLANIGQGNS (97 aa)).

It belongs to the phenylalanyl-tRNA synthetase beta subunit family. Type 1 subfamily. As to quaternary structure, tetramer of two alpha and two beta subunits. Mg(2+) is required as a cofactor.

It is found in the cytoplasm. It carries out the reaction tRNA(Phe) + L-phenylalanine + ATP = L-phenylalanyl-tRNA(Phe) + AMP + diphosphate + H(+). The sequence is that of Phenylalanine--tRNA ligase beta subunit (pheT) from Chlamydia trachomatis serovar D (strain ATCC VR-885 / DSM 19411 / UW-3/Cx).